The sequence spans 506 residues: MTQAVMLQGTASDVGKSVLAAGLCRIFYQDGLRTAPFKSQNMALNSGITSDGKEMGRAQIFQAEAAGITPDVRMNPVLLKPTSDRQAQVVLMGKVATNMDAVSYHDYKPRLREQILAVYNSLAQEYDVIVLEGAGSPAEINLRDRDIVNMGMAEMAQCPVILVADIDRGGVFAAIYGTLALLHKQERDRVKGVIINKFRGDVALLYSGIEQIESLTGVPVLGVMPWLDVDLEDEDGVALQNDKYRGNAPRDITIAIVQLPHISNFTDFNALAAQPDVRIRYIRRPEALTDADLVILPGSKNTLSDLAWLRESGMADALLQTHRQGVPVMGICGGYQMLGDTIVDEVESGLGTQPGLGLLNTITRFAQDKITTQVNATMSGELPSWLAAAAGLPVRGYEIHMGETVLQEGCCTAMTLQKNGCSVADGAVTADGLAFGTYLHGLFDSDAFTRAVVNGLRARKGLAPWETTFCYAEHKARQFDLLAEAMRQHIDIDKIYTIMQQHQEPV.

Positions aspartate 251–phenylalanine 448 constitute a GATase cobBQ-type domain. Cysteine 332 functions as the Nucleophile in the catalytic mechanism. Histidine 440 is a catalytic residue.

The protein belongs to the CobB/CobQ family. CobQ subfamily.

It functions in the pathway cofactor biosynthesis; adenosylcobalamin biosynthesis. Its function is as follows. Catalyzes amidations at positions B, D, E, and G on adenosylcobyrinic A,C-diamide. NH(2) groups are provided by glutamine, and one molecule of ATP is hydrogenolyzed for each amidation. The chain is Cobyric acid synthase from Salmonella dublin (strain CT_02021853).